A 405-amino-acid chain; its full sequence is Pulcherriminic acid synthase (405 aa).

Residues K62, N229, R285, and C353 each coordinate heme.

It belongs to the cytochrome P450 family. In terms of assembly, homodimer. Heme serves as cofactor.

The enzyme catalyses cyclo(L-leucyl-L-leucyl) + 6 reduced [2Fe-2S]-[ferredoxin] + 3 O2 + 4 H(+) = pulcherriminic acid + 6 oxidized [2Fe-2S]-[ferredoxin] + 4 H2O. Functionally, involved in the biosynthesis of pulcherrimin, a red extracellular pigment. Catalyzes the oxidation of cyclo(L-Leu-L-Leu) (cLL) to yield pulcherriminic acid which forms pulcherrimin via a nonenzymic reaction with Fe(3+). Substrates with small alkyl groups (cAA, cLG, cLP) exhibit weaker binding to CYP134A1, but substrates with larger hydrophobic side chains bind in a similar regime to cLL. This Bacillus subtilis (strain 168) protein is Pulcherriminic acid synthase (cypX).